Reading from the N-terminus, the 189-residue chain is Dirigent protein 21 (189 aa).

The N-terminal stretch at 1–19 is a signal peptide; it reads MASLYLLLLLPLFLALILA. N-linked (GlcNAc...) asparagine glycans are attached at residues Asn72 and Asn173.

Belongs to the plant dirigent protein family. As to quaternary structure, homodimer.

It localises to the secreted. In terms of biological role, dirigent proteins impart stereoselectivity on the phenoxy radical-coupling reaction, yielding optically active lignans from two molecules of coniferyl alcohol in the biosynthesis of lignans, flavonolignans, and alkaloids and thus plays a central role in plant secondary metabolism. The chain is Dirigent protein 21 (DIR21) from Arabidopsis thaliana (Mouse-ear cress).